Consider the following 627-residue polypeptide: MLDPTYPAFPIFAFLGIVCCLVPLPWHLQSWNSGTCFLMIWTAVACLNMFVNSIIWKDHAQNVAPVWCEISIRITLGASVGIPASSLCIVRRLYSIAKKFRAVMVDALICVLFPILYIILQIVVQGHRFNILENIGCFPAIINTPLTYPLTFMWPVLIGVISFIYSTLALIQFNRHRLQFTQFLHSNSTLSVSRYLRLMALAMTEMMCTTPMGVFVIILNAKATPVSPYVSWAVTHYGYGRIDQVPAIIWRSNRLLVASYELTRWSSPAIALIFFFYFGFAQEARRNYAAAWGWVRRAVGLPERVPSLPTTKKPFSSSDKGSGFAEKFAAKAKGLSSFNVKDFTSEFTSKAHDFTFKAKQYTLPRPMPQTPSSSGFSSSDSTRFGSSVDGKELPSPTTKEFSSPIPIHLSGMQTLASFDSNKDLPSPPAYDVEAQYGPYNIDNRVSYHIADAGVRASYPMGVAYSSDSEHRRIVPQHSTVPQHNTADEPASPALPDTPSSCSSSATFSTLQSRDFIVLPSTTDVTRGTGSLPTRRSPAGPPRLPSLSQLFGISSMTRERDVEAQVEDVATGTASPTTTAPAPASTTIAPASATMAPATTTTAPTTIANIQRGEPDVPASPRTHRASV.

Residues 1–7 (MLDPTYP) lie on the Extracellular side of the membrane. Residues 8–28 (AFPIFAFLGIVCCLVPLPWHL) traverse the membrane as a helical segment. The Cytoplasmic segment spans residues 29-35 (QSWNSGT). A helical membrane pass occupies residues 36 to 56 (CFLMIWTAVACLNMFVNSIIW). Residues 57 to 69 (KDHAQNVAPVWCE) are Extracellular-facing. A helical transmembrane segment spans residues 70-90 (ISIRITLGASVGIPASSLCIV). Topologically, residues 91 to 102 (RRLYSIAKKFRA) are cytoplasmic. A helical membrane pass occupies residues 103-123 (VMVDALICVLFPILYIILQIV). Topologically, residues 124–150 (VQGHRFNILENIGCFPAIINTPLTYPL) are extracellular. Residues 151–171 (TFMWPVLIGVISFIYSTLALI) form a helical membrane-spanning segment. At 172 to 197 (QFNRHRLQFTQFLHSNSTLSVSRYLR) the chain is on the cytoplasmic side. A helical transmembrane segment spans residues 198–218 (LMALAMTEMMCTTPMGVFVII). Over 219–260 (LNAKATPVSPYVSWAVTHYGYGRIDQVPAIIWRSNRLLVASY) the chain is Extracellular. The chain crosses the membrane as a helical span at residues 261–281 (ELTRWSSPAIALIFFFYFGFA). The Cytoplasmic portion of the chain corresponds to 282 to 627 (QEARRNYAAA…ASPRTHRASV (346 aa)). 3 disordered regions span residues 363–405 (LPRP…SSPI), 479–505 (TVPQHNTADEPASPALPDTPSSCSSSA), and 518–627 (LPST…RASV). The segment covering 372 to 387 (SSSGFSSSDSTRFGSS) has biased composition (low complexity). 2 stretches are compositionally biased toward polar residues: residues 519–533 (PSTTDVTRGTGSLPT) and 545–555 (SLSQLFGISSM). Residues 569–607 (ATGTASPTTTAPAPASTTIAPASATMAPATTTTAPTTIA) are compositionally biased toward low complexity.

It belongs to the G-protein coupled receptor 4 family.

It localises to the cell membrane. In terms of biological role, receptor for the BAP2 pheromone, a prenylated mating factor. The receptor/pheromone interaction may have a role in the fusion of clamp cells. This is Pheromone B alpha 2 receptor (BAR2) from Schizophyllum commune (Split gill fungus).